A 274-amino-acid chain; its full sequence is MGTVNITVSDGVRYAVADEGPNASEAVVCLHGFTGSKQSWTFLDEMLPDSRLIKIDCLGHGETDAPLNGKRYSTTRQVSDLAEIFDQLKLHKVKLIGYSMGGRLAYSFAMTYPERVSALVLESTTPGLKTLGERRERIMRDRKLADFILRDGLEAFVAYWENIPLFSSQQRLAEDIRYRIRSGRLRNNKIGLANSLTGMGTGSQPSLWSRVEEIDVPVLLICGEWDEKFCAINQEVHKMLPSSRIEIVPKAGHTVHVEQPRLFGKIVSEFLTSI.

An AB hydrolase-1 domain is found at 26–259 (AVVCLHGFTG…KAGHTVHVEQ (234 aa)).

The protein belongs to the AB hydrolase superfamily. MenH family. As to quaternary structure, monomer.

It carries out the reaction 5-enolpyruvoyl-6-hydroxy-2-succinyl-cyclohex-3-ene-1-carboxylate = (1R,6R)-6-hydroxy-2-succinyl-cyclohexa-2,4-diene-1-carboxylate + pyruvate. It functions in the pathway quinol/quinone metabolism; 1,4-dihydroxy-2-naphthoate biosynthesis; 1,4-dihydroxy-2-naphthoate from chorismate: step 3/7. Its pathway is quinol/quinone metabolism; menaquinone biosynthesis. In terms of biological role, catalyzes a proton abstraction reaction that results in 2,5-elimination of pyruvate from 2-succinyl-5-enolpyruvyl-6-hydroxy-3-cyclohexene-1-carboxylate (SEPHCHC) and the formation of 2-succinyl-6-hydroxy-2,4-cyclohexadiene-1-carboxylate (SHCHC). The chain is Putative 2-succinyl-6-hydroxy-2,4-cyclohexadiene-1-carboxylate synthase from Bacillus subtilis (strain 168).